We begin with the raw amino-acid sequence, 143 residues long: Transcriptional regulator SlyA (143 aa).

Residues 2 to 135 (ESTLGSDLAR…LSGLIDKLER (134 aa)) form the HTH marR-type domain. The segment at residues 49–72 (QIQLAKAIGIEQPSLVRTLDQLEE) is a DNA-binding region (H-T-H motif).

The protein belongs to the SlyA family. As to quaternary structure, homodimer.

In terms of biological role, transcription regulator that can specifically activate or repress expression of target genes. The polypeptide is Transcriptional regulator SlyA (Yersinia enterocolitica serotype O:8 / biotype 1B (strain NCTC 13174 / 8081)).